We begin with the raw amino-acid sequence, 407 residues long: Peptidase T (407 aa).

Residue histidine 82 coordinates Zn(2+). Aspartate 84 is an active-site residue. Aspartate 143 is a binding site for Zn(2+). Glutamate 177 acts as the Proton acceptor in catalysis. The Zn(2+) site is built by glutamate 178, aspartate 200, and histidine 382.

This sequence belongs to the peptidase M20B family. Requires Zn(2+) as cofactor.

Its subcellular location is the cytoplasm. The enzyme catalyses Release of the N-terminal residue from a tripeptide.. Its function is as follows. Cleaves the N-terminal amino acid of tripeptides. The chain is Peptidase T from Streptococcus pyogenes serotype M2 (strain MGAS10270).